A 621-amino-acid chain; its full sequence is Glutathione-regulated potassium-efflux system protein KefC (621 aa).

The next 12 helical transmembrane spans lie at 9–29 (ALIYLGAAALIVPIASVLGLG), 30–50 (SVLGYLIAGCIIGPWALRLVN), 54–74 (AILHFAEIGVVLMLVAMGLEL), 90–110 (GALQMVACGVLIGLFCMLLGL), 114–134 (VAELIGMTLALSSTAIAMQAM), 149–169 (FAVLLFQDIAAIPLVAMIPLL), 178–198 (LMAFALSALKVAAALALVVVL), 232–252 (LLLEEVGLSMAMGAFLAGVLL), 270–290 (GLLLGLFFIGVGMSIDFAPWS), 296–316 (IVILLVGFPAIKMLMLWLIAQ), 326–346 (RWFAVLLGQGSEFAFVVFGPA), and 359–379 (ALTLAVALSMATTPILLVLLT). Residues 399 to 518 (QPRVIVAGFG…AGVEAPERET (120 aa)) form the RCK N-terminal domain. Positions 598–621 (GWQGTEEGRHTGDIADEPENKPSA) are disordered.

It belongs to the monovalent cation:proton antiporter 2 (CPA2) transporter (TC 2.A.37) family. KefC subfamily. Homodimer. Interacts with the regulatory subunit KefF.

The protein resides in the cell inner membrane. Functionally, pore-forming subunit of a potassium efflux system that confers protection against electrophiles. Catalyzes K(+)/H(+) antiport. The protein is Glutathione-regulated potassium-efflux system protein KefC of Klebsiella aerogenes (Enterobacter aerogenes).